The following is a 564-amino-acid chain: Proline--tRNA ligase (564 aa).

This sequence belongs to the class-II aminoacyl-tRNA synthetase family. ProS type 1 subfamily. Homodimer.

It is found in the cytoplasm. The enzyme catalyses tRNA(Pro) + L-proline + ATP = L-prolyl-tRNA(Pro) + AMP + diphosphate. In terms of biological role, catalyzes the attachment of proline to tRNA(Pro) in a two-step reaction: proline is first activated by ATP to form Pro-AMP and then transferred to the acceptor end of tRNA(Pro). As ProRS can inadvertently accommodate and process non-cognate amino acids such as alanine and cysteine, to avoid such errors it has two additional distinct editing activities against alanine. One activity is designated as 'pretransfer' editing and involves the tRNA(Pro)-independent hydrolysis of activated Ala-AMP. The other activity is designated 'posttransfer' editing and involves deacylation of mischarged Ala-tRNA(Pro). The misacylated Cys-tRNA(Pro) is not edited by ProRS. This chain is Proline--tRNA ligase, found in Xylella fastidiosa (strain 9a5c).